Here is a 477-residue protein sequence, read N- to C-terminus: Glycogen synthase (477 aa).

Lys15 is an ADP-alpha-D-glucose binding site.

It belongs to the glycosyltransferase 1 family. Bacterial/plant glycogen synthase subfamily.

The enzyme catalyses [(1-&gt;4)-alpha-D-glucosyl](n) + ADP-alpha-D-glucose = [(1-&gt;4)-alpha-D-glucosyl](n+1) + ADP + H(+). It participates in glycan biosynthesis; glycogen biosynthesis. In terms of biological role, synthesizes alpha-1,4-glucan chains using ADP-glucose. This chain is Glycogen synthase, found in Klebsiella pneumoniae (strain 342).